A 369-amino-acid polypeptide reads, in one-letter code: Thyroid hormone receptor beta (369 aa).

Positions 1–14 (MSGYIPSYLDKDEL) are modulating. The Zn(2+) site is built by Cys-15, Cys-18, Cys-32, Cys-35, Cys-53, Cys-59, Cys-69, and Cys-72. NR C4-type zinc fingers lie at residues 15–35 (CVVC…CEGC) and 53–77 (CKYE…FKKC). Residues 15–89 (CVVCGDKATG…VGMATDLVLD (75 aa)) constitute a DNA-binding region (nuclear receptor). The NR LBD domain occupies 125–369 (EEWELIKIVT…PPLFLEVFED (245 aa)). 3,3',5-triiodo-L-thyronine is bound by residues Arg-190, Asn-239, and His-343. The L-thyroxine site is built by Arg-190, Asn-239, and His-343.

Belongs to the nuclear hormone receptor family. NR1 subfamily.

It is found in the nucleus. Functionally, nuclear hormone receptor that can act as a repressor or activator of transcription. High affinity receptor for thyroid hormones, including triiodothyronine and thyroxine. This is Thyroid hormone receptor beta (THRB) from Cairina moschata (Muscovy duck).